The following is a 300-amino-acid chain: Zinc finger CCCH-type antiviral protein 1-like (300 aa).

Residue A2 is modified to N-acetylalanine. A compositionally biased stretch (polar residues) spans 252-263 (NTDNSSPSTEHS). The segment at 252-300 (NTDNSSPSTEHSQGLEKQGVHAAGAAEAGPLASVPAQSAKKPCPVSCEK) is disordered. Low complexity predominate over residues 271–283 (VHAAGAAEAGPLA).

The protein is Zinc finger CCCH-type antiviral protein 1-like (ZC3HAV1L) of Homo sapiens (Human).